Consider the following 359-residue polypeptide: 5-formaminoimidazole-4-carboxamide-1-(beta)-D-ribofuranosyl 5'-monophosphate synthetase (359 aa).

5-amino-1-(5-phospho-beta-D-ribosyl)imidazole-4-carboxamide is bound by residues His27 and Ser94. One can recognise an ATP-grasp domain in the interval 116-340; it reads RRLLRWESER…FGEIVTMGRR (225 aa). ATP is bound by residues 146–208 and Glu230; that span reads PEDI…TNFC. Asn258 serves as a coordination point for 5-amino-1-(5-phospho-beta-D-ribosyl)imidazole-4-carboxamide. Positions 297 and 310 each coordinate Mg(2+).

This sequence belongs to the phosphohexose mutase family. The cofactor is Mg(2+). Requires Mn(2+) as cofactor.

The enzyme catalyses 5-amino-1-(5-phospho-beta-D-ribosyl)imidazole-4-carboxamide + formate + ATP = 5-formamido-1-(5-phospho-D-ribosyl)imidazole-4-carboxamide + ADP + phosphate. It participates in purine metabolism; IMP biosynthesis via de novo pathway; 5-formamido-1-(5-phospho-D-ribosyl)imidazole-4-carboxamide from 5-amino-1-(5-phospho-D-ribosyl)imidazole-4-carboxamide (formate route): step 1/1. Catalyzes the ATP- and formate-dependent formylation of 5-aminoimidazole-4-carboxamide-1-beta-d-ribofuranosyl 5'-monophosphate (AICAR) to 5-formaminoimidazole-4-carboxamide-1-beta-d-ribofuranosyl 5'-monophosphate (FAICAR) in the absence of folates. This is 5-formaminoimidazole-4-carboxamide-1-(beta)-D-ribofuranosyl 5'-monophosphate synthetase from Methanopyrus kandleri (strain AV19 / DSM 6324 / JCM 9639 / NBRC 100938).